Here is a 1860-residue protein sequence, read N- to C-terminus: Proprotein convertase subtilisin/kexin type 5 (1860 aa).

An N-terminal signal peptide occupies residues Met-1–Thr-32. The propeptide occupies Arg-33 to Arg-114. Topologically, residues Asp-115–Thr-1743 are extracellular. The Peptidase S8 domain occupies Met-134–Val-453. Catalysis depends on charge relay system residues Asp-171 and His-212. 2 N-linked (GlcNAc...) asparagine glycosylation sites follow: Asn-225 and Asn-381. Residue Ser-386 is the Charge relay system of the active site. In terms of domain architecture, P/Homo B spans Thr-461–Gln-601. The Cell attachment site motif lies at Arg-519–Asp-521. FU repeat units lie at residues Glu-630 to His-680, Lys-683 to Gln-730, Lys-734 to Phe-777, Gly-779 to Phe-824, Tyr-832 to Val-879, His-882 to Glu-927, Glu-929 to Ala-979, Gly-982 to Gln-1028, Tyr-1032 to Ser-1077, Glu-1079 to Gly-1121, Met-1125 to Glu-1168, Leu-1177 to Pro-1221, Ser-1225 to Ala-1272, Asp-1274 to Ala-1318, Lys-1320 to Ala-1363, Ser-1365 to Tyr-1411, Thr-1415 to Trp-1461, Ala-1465 to Ala-1510, Ser-1514 to Ala-1559, Thr-1563 to Val-1610, Thr-1614 to Arg-1659, and Lys-1665 to Pro-1712. The CRM (Cys-rich motif) stretch occupies residues Cys-636–Cys-1727. Residue Asn-665 is glycosylated (N-linked (GlcNAc...) asparagine). N-linked (GlcNAc...) asparagine glycans are attached at residues Asn-752, Asn-802, and Asn-852. Residues Met-869–Asp-913 enclose the PLAC domain. Residue Asn-1014 is glycosylated (N-linked (GlcNAc...) asparagine). The N-linked (GlcNAc...) asparagine glycan is linked to Asn-1191. The N-linked (GlcNAc...) asparagine glycan is linked to Asn-1290. Residue Asn-1497 is glycosylated (N-linked (GlcNAc...) asparagine). Residues Asn-1685 and Asn-1707 are each glycosylated (N-linked (GlcNAc...) asparagine). The chain crosses the membrane as a helical span at residues Ala-1744–Trp-1764. The Cytoplasmic portion of the chain corresponds to Lys-1765 to Gln-1860. 2 AC regions span residues Val-1807–Met-1826 and Tyr-1838–Gln-1860.

It belongs to the peptidase S8 family. In terms of tissue distribution, expressed in T-lymphocytes.

It localises to the secreted. The protein localises to the endomembrane system. Serine endoprotease that processes various proproteins by cleavage at paired basic amino acids, recognizing the RXXX[KR]R consensus motif. Likely functions in the constitutive and regulated secretory pathways. Plays an essential role in pregnancy establishment by proteolytic activation of a number of important factors such as BMP2, CALD1 and alpha-integrins. The protein is Proprotein convertase subtilisin/kexin type 5 (PCSK5) of Homo sapiens (Human).